The primary structure comprises 456 residues: Phosphomannomutase (456 aa).

The active-site Phosphoserine intermediate is Ser98. Mg(2+) contacts are provided by Ser98, Asp246, Asp248, and Asp250.

Belongs to the phosphohexose mutase family. Requires Mg(2+) as cofactor.

The catalysed reaction is alpha-D-mannose 1-phosphate = D-mannose 6-phosphate. Its pathway is nucleotide-sugar biosynthesis; GDP-alpha-D-mannose biosynthesis; alpha-D-mannose 1-phosphate from D-fructose 6-phosphate: step 2/2. It participates in bacterial outer membrane biogenesis; LPS O-antigen biosynthesis. Involved in GDP-mannose biosynthesis which serves as the activated sugar nucleotide precursor for mannose residues in cell surface polysaccharides. This enzyme participates in synthesis of the LPS O9 antigen. This Escherichia coli protein is Phosphomannomutase (manB).